The chain runs to 411 residues: Glycerol-3-phosphate dehydrogenase [NAD(+)] (411 aa).

Residues 71–76, Phe-103, and Phe-159 each bind NAD(+); that span reads GSGNWG. Lys-182 lines the substrate pocket. Ala-215 contacts NAD(+). Lys-275 acts as the Proton acceptor in catalysis. NAD(+)-binding residues include Arg-340 and Gln-369. Substrate is bound at residue 340-341; the sequence is RN.

The protein belongs to the NAD-dependent glycerol-3-phosphate dehydrogenase family.

The enzyme catalyses sn-glycerol 3-phosphate + NAD(+) = dihydroxyacetone phosphate + NADH + H(+). This is Glycerol-3-phosphate dehydrogenase [NAD(+)] (GPD) from Lachancea thermotolerans (Yeast).